Here is a 326-residue protein sequence, read N- to C-terminus: ELAV-like protein 1 (326 aa).

Serine 2 carries the post-translational modification N-acetylserine. Serine 2 carries the post-translational modification Phosphoserine. Residues 20–98 (TNLIVNYLPQ…KTIKVSYARP (79 aa)) form the RRM 1 domain. Phosphoserine is present on residues serine 100 and serine 158. One can recognise an RRM 2 domain in the interval 106–186 (ANLYISGLPR…EPITVKFAAN (81 aa)). A Glycyl lysine isopeptide (Lys-Gly) (interchain with G-Cter in SUMO2) cross-link involves residue lysine 191. Phosphoserine is present on residues serine 197 and serine 202. Arginine 206 is modified (omega-N-methylarginine). At arginine 217 the chain carries Asymmetric dimethylarginine; by CARM1; alternate. Arginine 217 carries the omega-N-methylarginine; alternate modification. 2 positions are modified to phosphoserine: serine 221 and serine 318. In terms of domain architecture, RRM 3 spans 244 to 322 (WCIFIYNLGQ…KILQVSFKTN (79 aa)).

Belongs to the RRM elav family. As to quaternary structure, monomer and homodimer (in vitro). Interacts with ANP32A. Interacts with ZNF385A; the interaction is indirect and mRNA-dependent and may regulate p53/TP53 expression. Identified in a mRNP complex, at least composed of DHX9, DDX3X, ELAVL1, HNRNPU, IGF2BP1, ILF3, PABPC1, PCBP2, PTBP2, STAU1, STAU2, SYNCRIP and YBX1. Interacts with AGO1 and AGO2. Interacts with IGF2BP1. Interacts with IGF2BP2 and IGF2BP3. Interacts with HNRNPL. Interacts with DHX36; this interaction occurs in a RNA-dependent manner. Interacts with ILF3; this interaction occurs in a RNA-dependent manner. Interacts with PLEKHN1. Interacts with SHFL; the interaction increases in presence of RNA. Interacts with YBX1; interaction recruits ELAVL1 on C5-methylcytosine (m5C)-containing mRNAs, thereby promoting mRNA stability. Interacts with FXR1. In terms of processing, phosphorylated by MAPKAPK2. Phosphorylated by PRKCD. Post-translationally, methylated at Arg-217 by CARM1 in T-cells in response to LPS challenge.

Its subcellular location is the cytoplasm. The protein localises to the nucleus. The protein resides in the stress granule. It localises to the P-body. RNA-binding protein that binds to the 3'-UTR region of mRNAs and increases their stability. Involved in embryonic stem cell (ESC) differentiation: preferentially binds mRNAs that are not methylated by N6-methyladenosine (m6A), stabilizing them, promoting ESC differentiation. Has also been shown to be capable of binding to m6A-containing mRNAs and contributes to MYC stability by binding to m6A-containing MYC mRNAs. Binds to poly-U elements and AU-rich elements (AREs) in the 3'-UTR of target mRNAs. Binds avidly to the AU-rich element in FOS and IL3/interleukin-3 mRNAs. In the case of the FOS AU-rich element, binds to a core element of 27 nucleotides that contain AUUUA, AUUUUA, and AUUUUUA motifs. Binds preferentially to the 5'-UUUU[AG]UUU-3' motif in vitro. With ZNF385A, binds the 3'-UTR of p53/TP53 mRNA to control their nuclear export induced by CDKN2A. Hence, may regulate p53/TP53 expression and mediate in part the CDKN2A anti-proliferative activity. May also bind with ZNF385A the CCNB1 mRNA. Increases the stability of the leptin mRNA harboring an AU-rich element (ARE) in its 3' UTR. This chain is ELAV-like protein 1 (Elavl1), found in Mus musculus (Mouse).